Here is a 456-residue protein sequence, read N- to C-terminus: Bifunctional protein GlmU (456 aa).

A pyrophosphorylase region spans residues 1 to 229; it reads MYKSAVILAA…PDEIKGVNSR (229 aa). UDP-N-acetyl-alpha-D-glucosamine is bound by residues 8–11, Lys-22, Gln-73, and 78–79; these read LAAG and GT. Asp-103 contributes to the Mg(2+) binding site. 4 residues coordinate UDP-N-acetyl-alpha-D-glucosamine: Gly-140, Glu-155, Asn-170, and Asn-227. Asn-227 lines the Mg(2+) pocket. A linker region spans residues 230–250; sequence GQLAEAEEILRLRINERHMEN. An N-acetyltransferase region spans residues 251–456; that stretch reads GVTLIDPKNT…GWVAKKGLKK (206 aa). The UDP-N-acetyl-alpha-D-glucosamine site is built by Arg-332 and Lys-350. The active-site Proton acceptor is His-362. UDP-N-acetyl-alpha-D-glucosamine is bound by residues Tyr-365 and Asn-376. Residues 385–386, Ala-422, and Arg-439 contribute to the acetyl-CoA site; that span reads NY.

In the N-terminal section; belongs to the N-acetylglucosamine-1-phosphate uridyltransferase family. It in the C-terminal section; belongs to the transferase hexapeptide repeat family. In terms of assembly, homotrimer. It depends on Mg(2+) as a cofactor.

It is found in the cytoplasm. The catalysed reaction is alpha-D-glucosamine 1-phosphate + acetyl-CoA = N-acetyl-alpha-D-glucosamine 1-phosphate + CoA + H(+). The enzyme catalyses N-acetyl-alpha-D-glucosamine 1-phosphate + UTP + H(+) = UDP-N-acetyl-alpha-D-glucosamine + diphosphate. It participates in nucleotide-sugar biosynthesis; UDP-N-acetyl-alpha-D-glucosamine biosynthesis; N-acetyl-alpha-D-glucosamine 1-phosphate from alpha-D-glucosamine 6-phosphate (route II): step 2/2. Its pathway is nucleotide-sugar biosynthesis; UDP-N-acetyl-alpha-D-glucosamine biosynthesis; UDP-N-acetyl-alpha-D-glucosamine from N-acetyl-alpha-D-glucosamine 1-phosphate: step 1/1. The protein operates within bacterial outer membrane biogenesis; LPS lipid A biosynthesis. Functionally, catalyzes the last two sequential reactions in the de novo biosynthetic pathway for UDP-N-acetylglucosamine (UDP-GlcNAc). The C-terminal domain catalyzes the transfer of acetyl group from acetyl coenzyme A to glucosamine-1-phosphate (GlcN-1-P) to produce N-acetylglucosamine-1-phosphate (GlcNAc-1-P), which is converted into UDP-GlcNAc by the transfer of uridine 5-monophosphate (from uridine 5-triphosphate), a reaction catalyzed by the N-terminal domain. This chain is Bifunctional protein GlmU, found in Clostridium novyi (strain NT).